A 1394-amino-acid chain; its full sequence is Leucine-rich PPR motif-containing protein, mitochondrial (1394 aa).

The N-terminal 59 residues, 1–59 (MAALLRSARWLLRAGAAPRLPLSLRLLPGGPGRLHAASYLPAARAGPVAGGLLSPARLY), are a transit peptide targeting the mitochondrion. 8 PPR repeats span residues 126 to 160 (LLRS…GAVY), 161 to 195 (DVSH…NIQP), 196 to 230 (NRVT…DLPV), 231 to 265 (TEAV…GIEP), 266 to 300 (GPDT…ELHL), 301 to 335 (MDRD…RRYI), 403 to 437 (HSFP…GFPI), and 438 to 472 (RPHY…GVHP). Lys155, Lys187, and Lys226 each carry N6-acetyllysine. Lys292 is modified (N6-acetyllysine). N6-acetyllysine occurs at positions 463 and 613. PPR repeat units follow at residues 678-709 (IRDV…ESDM), 710-746 (VTGG…SAVL), 747-784 (DTGK…IKDT), 785-820 (TALS…LAEP), 821-856 (STNI…KVLP), and 954-988 (RDQM…NVIP). The segment at 712–1067 (GGYAALINLC…AKEQNIVFNA (356 aa)) is interaction with BECN1 and Aedes aegypti venom allergen-1. An N6-acetyllysine mark is found at Lys726 and Lys750. Residues Ser1026, Ser1027, and Ser1029 each carry the phosphoserine modification. PPR repeat units follow at residues 1031 to 1065 (TEPD…NIVF), 1066 to 1102 (NAET…GFTL), 1103 to 1137 (NDAA…QQTP), 1138 to 1175 (SRLA…IGLS), 1176 to 1210 (KMVF…ENKV), and 1317 to 1351 (KEEA…NTKL). The RNA-binding stretch occupies residues 1121-1394 (KEAVTTLKTV…QLRKLRENSS (274 aa)). Thr1136 carries the post-translational modification Phosphothreonine. Ser1138 carries the phosphoserine modification.

Component of mRNP complexes associated with HNRPA1. Component of the complex, at least composed of LRPPRC, BECN1 and BCL2; the interactions prevent BECN1 from forming an autophagy-inducing complex with PIK3C3. Interacts with CECR2, HEBP2, MAP1S and UXT. Interacts with PPARGC1A. Interacts with FOXO1. Interacts (via N-terminus) with EIF4E; the interaction promotes association of EIF4E with 4ESE-containing mRNAs. Interacts with exportin XPO1/CRM1; interacts both alone and in complex with EIF4E and 4ESE-containing mRNAs to form an EIF4E-dependent mRNA export complex. Interacts with importin IPO8; the interaction occurs when LRPPRC is in its RNA-free form and returns LRPPRC to the nucleus for further export rounds. Interacts with BECN1. Interacts with Aedes aegypti venom allergen-1; the interaction interrupts BECN1 and LRPPRC association. As to expression, expressed ubiquitously. Expression is highest in heart, skeletal muscle, kidney and liver, intermediate in brain, non-mucosal colon, spleen and placenta, and lowest in small intestine, thymus, lung and peripheral blood leukocytes.

It localises to the mitochondrion. It is found in the nucleus. Its subcellular location is the nucleoplasm. The protein localises to the nucleus inner membrane. The protein resides in the nucleus outer membrane. May play a role in RNA metabolism in both nuclei and mitochondria. In the nucleus binds to HNRPA1-associated poly(A) mRNAs and is part of nmRNP complexes at late stages of mRNA maturation which are possibly associated with nuclear mRNA export. Positively modulates nuclear export of mRNAs containing the EIF4E sensitivity element (4ESE) by binding simultaneously to both EIF4E and the 4ESE and acting as a platform for assembly for the RNA export complex. Also binds to exportin XPO1/CRM1 to engage the nuclear pore and traffic the bound mRNAs to the cytoplasm. May bind mature mRNA in the nucleus outer membrane. In mitochondria binds to poly(A) mRNA. Plays a role in translation or stability of mitochondrially encoded cytochrome c oxidase (COX) subunits. May be involved in transcription regulation. Cooperates with PPARGC1A to regulate certain mitochondrially encoded genes and gluconeogenic genes and may regulate docking of PPARGC1A to transcription factors. Seems to be involved in the transcription regulation of the multidrug-related genes MDR1 and MVP. Part of a nuclear factor that binds to the invMED1 element of MDR1 and MVP gene promoters. Binds single-stranded DNA. Required for maintaining mitochondrial potential. Suppresses the initiation of basal levels of autophagy and mitophagy by sustaining BCL2 levels. In Homo sapiens (Human), this protein is Leucine-rich PPR motif-containing protein, mitochondrial (LRPPRC).